The primary structure comprises 185 residues: Ribosome-recycling factor (185 aa).

This sequence belongs to the RRF family.

Its subcellular location is the cytoplasm. Its function is as follows. Responsible for the release of ribosomes from messenger RNA at the termination of protein biosynthesis. May increase the efficiency of translation by recycling ribosomes from one round of translation to another. This Campylobacter jejuni subsp. jejuni serotype O:2 (strain ATCC 700819 / NCTC 11168) protein is Ribosome-recycling factor.